Here is a 398-residue protein sequence, read N- to C-terminus: MELVKGNIASPKGFYADGKHAGLKRKRNDIGWIYSEVPANAAAVYTMNQMQAAPIFVTKDSFQSNAKLQAIIVNSGNANACTGNQGMLDALAMRAQTAEKLDIPLDYVAVASTGIIGDMLPMDKINAGIEMLEKQTGNAADFEEAILTTDTFQKQISFQTEIGGRKVTMSGVAKGSGMIHPNMATMLAFITTDAAIPAELLQKLLKIKVDKTFNQITVDGDTSTNDMVVVMANGCAENPMLQEGTADFAKFADMFQAVMEHLAKSIARDGEGATKLIEVQVNGATKTEDARMIAKKIVSSSLVKTAAFGGDGNWGRIICAIGYSGGRFAPDNITIKIGGIEILNHSSQTIFNQQALDAYLEEEHIIIDVDLHIGLESGTAWGCDLSYEYVKINACYRT.

Positions 148, 174, 185, 271, 393, and 398 each coordinate substrate. Thr185 serves as the catalytic Nucleophile.

The protein belongs to the ArgJ family. In terms of assembly, heterotetramer of two alpha and two beta chains.

The protein localises to the cytoplasm. It carries out the reaction N(2)-acetyl-L-ornithine + L-glutamate = N-acetyl-L-glutamate + L-ornithine. It catalyses the reaction L-glutamate + acetyl-CoA = N-acetyl-L-glutamate + CoA + H(+). It participates in amino-acid biosynthesis; L-arginine biosynthesis; L-ornithine and N-acetyl-L-glutamate from L-glutamate and N(2)-acetyl-L-ornithine (cyclic): step 1/1. The protein operates within amino-acid biosynthesis; L-arginine biosynthesis; N(2)-acetyl-L-ornithine from L-glutamate: step 1/4. Functionally, catalyzes two activities which are involved in the cyclic version of arginine biosynthesis: the synthesis of N-acetylglutamate from glutamate and acetyl-CoA as the acetyl donor, and of ornithine by transacetylation between N(2)-acetylornithine and glutamate. This Listeria monocytogenes serotype 4b (strain F2365) protein is Arginine biosynthesis bifunctional protein ArgJ.